We begin with the raw amino-acid sequence, 604 residues long: Elongation factor 4 (604 aa).

Positions 10–191 (KNIRNFSIIA…KIITTIPAPS (182 aa)) constitute a tr-type G domain. GTP contacts are provided by residues 22–27 (DHGKST) and 138–141 (NKID).

Belongs to the TRAFAC class translation factor GTPase superfamily. Classic translation factor GTPase family. LepA subfamily.

The protein localises to the cell inner membrane. It carries out the reaction GTP + H2O = GDP + phosphate + H(+). Its function is as follows. Required for accurate and efficient protein synthesis under certain stress conditions. May act as a fidelity factor of the translation reaction, by catalyzing a one-codon backward translocation of tRNAs on improperly translocated ribosomes. Back-translocation proceeds from a post-translocation (POST) complex to a pre-translocation (PRE) complex, thus giving elongation factor G a second chance to translocate the tRNAs correctly. Binds to ribosomes in a GTP-dependent manner. This chain is Elongation factor 4, found in Helicobacter pylori (strain P12).